A 269-amino-acid polypeptide reads, in one-letter code: Chymotrypsin-like elastase family member 2A (269 aa).

The first 16 residues, 1–16, serve as a signal peptide directing secretion; that stretch reads MIRALLLSTLVAGALS. Residues 17–28 constitute a propeptide, activation peptide; the sequence is CGLPANLPQLPR. One can recognise a Peptidase S1 domain in the interval 29 to 267; it reads VVGGEDARPN…YIDWINSVIA (239 aa). Cysteine 58 and cysteine 74 are disulfide-bonded. Catalysis depends on charge relay system residues histidine 73 and aspartate 121. 3 disulfides stabilise this stretch: cysteine 155-cysteine 222, cysteine 186-cysteine 202, and cysteine 212-cysteine 243. The active-site Charge relay system is the serine 216.

This sequence belongs to the peptidase S1 family. Elastase subfamily. In terms of assembly, interacts with CPA1. Interacts with SERPINA1. Pancreas.

It localises to the secreted. It catalyses the reaction Preferential cleavage: Leu-|-Xaa, Met-|-Xaa and Phe-|-Xaa. Hydrolyzes elastin.. Elastase that enhances insulin signaling and might have a physiologic role in cellular glucose metabolism. Circulates in plasma and reduces platelet hyperactivation, triggers both insulin secretion and degradation, and increases insulin sensitivity. The sequence is that of Chymotrypsin-like elastase family member 2A (CELA2A) from Sus scrofa (Pig).